The sequence spans 316 residues: Phosphate acyltransferase (316 aa).

It belongs to the PlsX family. In terms of assembly, homodimer. Probably interacts with PlsY.

Its subcellular location is the cytoplasm. It catalyses the reaction a fatty acyl-[ACP] + phosphate = an acyl phosphate + holo-[ACP]. Its pathway is lipid metabolism; phospholipid metabolism. Functionally, catalyzes the reversible formation of acyl-phosphate (acyl-PO(4)) from acyl-[acyl-carrier-protein] (acyl-ACP). This enzyme utilizes acyl-ACP as fatty acyl donor, but not acyl-CoA. This is Phosphate acyltransferase from Chlamydia abortus (strain DSM 27085 / S26/3) (Chlamydophila abortus).